A 389-amino-acid chain; its full sequence is Mating-type protein MAT-1 (389 aa).

Positions 70-127 (KAKKALNAFVGFRCYYISIPHFKSWPMKKLSNLIGLLWETDPNKSLWSLMTKAWSAIR) form a DNA-binding region, alpha box.

This sequence belongs to the MATALPHA1 family.

It is found in the nucleus. Functionally, mating type proteins are sequence specific DNA-binding proteins that act as master switches in fungal differentiation by controlling gene expression in a cell type-specific fashion. Transcriptional activator that induces the transcription of alpha-specific genes. The chain is Mating-type protein MAT-1 (MAT1) from Alternaria alternata (Alternaria rot fungus).